The sequence spans 396 residues: Elongation factor Tu 2 (396 aa).

One can recognise a tr-type G domain in the interval 10–206 (KLHVNVGTIG…ALDTFIPDPT (197 aa)). Residues 19–26 (GHVDHGKT) form a G1 region. Residue 19–26 (GHVDHGKT) coordinates GTP. Threonine 26 contacts Mg(2+). The tract at residues 60–64 (GITIS) is G2. The G3 stretch occupies residues 81-84 (DCPG). Residues 81–85 (DCPGH) and 136–139 (NKAD) each bind GTP. Positions 136–139 (NKAD) are G4. Positions 174–176 (SAR) are G5.

It belongs to the TRAFAC class translation factor GTPase superfamily. Classic translation factor GTPase family. EF-Tu/EF-1A subfamily. Monomer.

The protein resides in the cytoplasm. The enzyme catalyses GTP + H2O = GDP + phosphate + H(+). GTP hydrolase that promotes the GTP-dependent binding of aminoacyl-tRNA to the A-site of ribosomes during protein biosynthesis. This is Elongation factor Tu 2 from Xanthomonas campestris pv. campestris (strain 8004).